Consider the following 189-residue polypeptide: Peptidyl-tRNA hydrolase (189 aa).

Tyrosine 14 contributes to the tRNA binding site. Histidine 19 acts as the Proton acceptor in catalysis. The tRNA site is built by tyrosine 64, asparagine 66, and asparagine 112.

The protein belongs to the PTH family. Monomer.

It is found in the cytoplasm. The enzyme catalyses an N-acyl-L-alpha-aminoacyl-tRNA + H2O = an N-acyl-L-amino acid + a tRNA + H(+). In terms of biological role, hydrolyzes ribosome-free peptidyl-tRNAs (with 1 or more amino acids incorporated), which drop off the ribosome during protein synthesis, or as a result of ribosome stalling. Functionally, catalyzes the release of premature peptidyl moieties from peptidyl-tRNA molecules trapped in stalled 50S ribosomal subunits, and thus maintains levels of free tRNAs and 50S ribosomes. In Clostridium botulinum (strain Langeland / NCTC 10281 / Type F), this protein is Peptidyl-tRNA hydrolase.